The primary structure comprises 579 residues: Mitochondrial distribution and morphology protein 36 (579 aa).

Residues methionine 1–lysine 27 form a disordered region. The residue at position 42 (serine 42) is a Phosphoserine. 2 disordered regions span residues threonine 378 to leucine 401 and aspartate 446 to serine 518. Polar residues predominate over residues proline 379 to asparagine 390. Basic and acidic residues predominate over residues aspartate 446–histidine 463. A compositionally biased stretch (low complexity) spans proline 495 to serine 518.

Functionally, involved in mitochondrial distribution and morphology. This chain is Mitochondrial distribution and morphology protein 36 (MDM36), found in Saccharomyces cerevisiae (strain ATCC 204508 / S288c) (Baker's yeast).